A 341-amino-acid polypeptide reads, in one-letter code: UDP-3-O-acylglucosamine N-acyltransferase 2 (341 aa).

The active-site Proton acceptor is His-254.

The protein belongs to the transferase hexapeptide repeat family. LpxD subfamily. As to quaternary structure, homotrimer.

The catalysed reaction is a UDP-3-O-[(3R)-3-hydroxyacyl]-alpha-D-glucosamine + a (3R)-hydroxyacyl-[ACP] = a UDP-2-N,3-O-bis[(3R)-3-hydroxyacyl]-alpha-D-glucosamine + holo-[ACP] + H(+). It functions in the pathway bacterial outer membrane biogenesis; LPS lipid A biosynthesis. Its function is as follows. Catalyzes the N-acylation of UDP-3-O-acylglucosamine using 3-hydroxyacyl-ACP as the acyl donor. Is involved in the biosynthesis of lipid A, a phosphorylated glycolipid that anchors the lipopolysaccharide to the outer membrane of the cell. In Nitrobacter winogradskyi (strain ATCC 25391 / DSM 10237 / CIP 104748 / NCIMB 11846 / Nb-255), this protein is UDP-3-O-acylglucosamine N-acyltransferase 2.